A 629-amino-acid chain; its full sequence is MFYQDPFDVIIIGGGHAGTEAAMAAARMGQQTLLLTHNIDTLGQMSCNPTIGGIGKGHLVKEVDALGGLMAKAIDQAGIQFKILNASKGPAVRATRAQADRVLYRQAVRIALENQPNLMIFQQAVEDLIVENDRVVGAVTQMGLKFRAKAVVLTVGTFLDGKIHIGLDNYSGGRAGDPPSIPLSRRLRELPLRVSRLKTGTPPRIDARTIDFSVLAQQHGDNPMPVFSFMGNAFQHPQQVPCYITHTNEKTHDVIRNNLDRSPMYAGVIEGIGPRYCPSIEDKVMRFADRNQHQIFLEPEGLTSNEIYPNGISTSLPFDVQMQIVRSMQGMENAKIVRPGYAIEYDFFDPRDLKPTLESKFIHGLFFAGQINGTTGYEEAAAQGLLAGLNAARLSADKEGWAPARSQAYLGVLVDDLCTLGTKEPYRMFTSRAEYRLMLREDNADLRLTEMGRELGLVDDERWARFNEKLENIERERQRLKSTWVTPSAESADEVNAHLTTPLSREASGEDLLRRPEMTYAQLTSLAAFAPALEDEQAAEQVEIQVKYEGYIARQQDEIEKQLRNENTLLPATLDYRQVSGLSNEVIAKLNDHKPASIGQASRISGVTPAAISILLVWLKKQGMLRRSA.

Residues 13–18 (GGGHAG), Val125, and Ser180 contribute to the FAD site. Residue 273-287 (GPRYCPSIEDKVMRF) coordinates NAD(+). Gln370 lines the FAD pocket.

This sequence belongs to the MnmG family. Homodimer. Heterotetramer of two MnmE and two MnmG subunits. The cofactor is FAD.

The protein localises to the cytoplasm. Functionally, NAD-binding protein involved in the addition of a carboxymethylaminomethyl (cmnm) group at the wobble position (U34) of certain tRNAs, forming tRNA-cmnm(5)s(2)U34. The protein is tRNA uridine 5-carboxymethylaminomethyl modification enzyme MnmG of Salmonella typhi.